The sequence spans 886 residues: Alanine--tRNA ligase (886 aa).

Residues His-570, His-574, Cys-672, and His-676 each coordinate Zn(2+).

The protein belongs to the class-II aminoacyl-tRNA synthetase family. Requires Zn(2+) as cofactor.

It is found in the cytoplasm. The enzyme catalyses tRNA(Ala) + L-alanine + ATP = L-alanyl-tRNA(Ala) + AMP + diphosphate. In terms of biological role, catalyzes the attachment of alanine to tRNA(Ala) in a two-step reaction: alanine is first activated by ATP to form Ala-AMP and then transferred to the acceptor end of tRNA(Ala). Also edits incorrectly charged Ser-tRNA(Ala) and Gly-tRNA(Ala) via its editing domain. This is Alanine--tRNA ligase from Acidothermus cellulolyticus (strain ATCC 43068 / DSM 8971 / 11B).